The following is a 246-amino-acid chain: Probable transcriptional regulatory protein WRi_002620 (246 aa).

Residues 1–22 are disordered; the sequence is MAGHSQFSNIKHRKGAQDAKRS.

It belongs to the TACO1 family.

It is found in the cytoplasm. The polypeptide is Probable transcriptional regulatory protein WRi_002620 (Wolbachia sp. subsp. Drosophila simulans (strain wRi)).